Consider the following 434-residue polypeptide: 5'-deoxyadenosine deaminase (434 aa).

2 residues coordinate Zn(2+): H63 and H65. E92 and H184 together coordinate substrate. H211 contacts Zn(2+). 2 residues coordinate substrate: E214 and D299. Zn(2+) is bound at residue D299.

This sequence belongs to the metallo-dependent hydrolases superfamily. MTA/SAH deaminase family. As to quaternary structure, homotetramer. The cofactor is Zn(2+).

The enzyme catalyses 5'-deoxyadenosine + H2O + H(+) = 5'-deoxyinosine + NH4(+). It carries out the reaction S-adenosyl-L-homocysteine + H2O + H(+) = S-inosyl-L-homocysteine + NH4(+). It catalyses the reaction S-methyl-5'-thioadenosine + H2O + H(+) = S-methyl-5'-thioinosine + NH4(+). The catalysed reaction is adenosine + H2O + H(+) = inosine + NH4(+). It functions in the pathway amino-acid biosynthesis; S-adenosyl-L-methionine biosynthesis. Functionally, catalyzes the deamination of three SAM-derived enzymatic products, namely 5'-deoxyadenosine, S-adenosyl-L-homocysteine, and 5'-methylthioadenosine, to produce the inosine analogs. Can also deaminate adenosine. The preferred substrate for this enzyme is 5'-deoxyadenosine, but all these substrates are efficiently deaminated. Likely functions in a S-adenosyl-L-methionine (SAM) recycling pathway from S-adenosyl-L-homocysteine (SAH) produced from SAM-dependent methylation reactions. May also be involved in the recycling of 5'-deoxyadenosine, whereupon the 5'-deoxyribose moiety of 5'-deoxyinosine is further metabolized to deoxyhexoses used for the biosynthesis of aromatic amino acids in methanogens. The protein is 5'-deoxyadenosine deaminase of Methanococcoides burtonii (strain DSM 6242 / NBRC 107633 / OCM 468 / ACE-M).